We begin with the raw amino-acid sequence, 343 residues long: Trace amine-associated receptor 3 (343 aa).

At 1–35 (MDLIYIPEDLSSCPKFGNKSCPPTNRSFRVRMIMY) the chain is on the extracellular side. Asn-18 and Asn-25 each carry an N-linked (GlcNAc...) asparagine glycan. 2 disulfides stabilise this stretch: Cys-21–Cys-185 and Cys-104–Cys-189. Residues 36 to 56 (LFMTGAMVITIFGNLVIIISI) traverse the membrane as a helical segment. The Cytoplasmic segment spans residues 57–68 (SHFKQLHSPTNF). Residues 69–89 (LILSMATTDFLLGFVIMPYSM) traverse the membrane as a helical segment. Residues 90 to 150 (VRSVESCWYF…TTMTVSMIKR (61 aa)) are Extracellular-facing. The helical transmembrane segment at 151-168 (LLAFCWAAPALFSFGLVL) threads the bilayer. Over 169–172 (SEAN) the chain is Cytoplasmic. The extracellular Loop 2 (ECL2) stretch occupies residues 173 to 186 (VSGMQSYEILVACF). A helical transmembrane segment spans residues 173–193 (VSGMQSYEILVACFNFCALTF). Over 194 to 198 (NKFWG) the chain is Extracellular. A helical membrane pass occupies residues 199-223 (TILFTTCFFTPGSIMVGIYGKIFIV). The Cytoplasmic segment spans residues 224–257 (SRRHARALSDMPANTKGAVGKNLSKKKDRKAAKT). A helical membrane pass occupies residues 258–278 (LGIVMGVFLACWLPCFLAVLI). Residues 279 to 287 (DPYLDYSTP) lie on the Extracellular side of the membrane. The chain crosses the membrane as a helical span at residues 288–308 (IIVLDLLVWLGYFNSTCNPLI). At 309 to 343 (HGFFYPWFRKALQFIVSGKIFRSNSDTANLFPEAH) the chain is on the cytoplasmic side.

Belongs to the G-protein coupled receptor 1 family. As to expression, specifically expressed in neurons of the olfactory epithelium.

Its subcellular location is the cell membrane. Functionally, olfactory receptor activated by several primary trace amines, including isoamylamine. Activated by isoamylamine and cyclohexylamine, but not to the corresponding alcohols, isoamylalcohol and cyclohexanol. This receptor is probably mediated by the G(s)-class of G-proteins which activate adenylate cyclase. This chain is Trace amine-associated receptor 3, found in Mus musculus (Mouse).